Consider the following 1013-residue polypeptide: Probable beta-galactosidase B (1013 aa).

Residues methionine 1 to alanine 21 form the signal peptide. Substrate is bound at residue tyrosine 90. A glycan (N-linked (GlcNAc...) asparagine) is linked at asparagine 100. Asparagine 135, alanine 136, glutamate 137, and asparagine 195 together coordinate substrate. Glutamate 196 (proton donor) is an active-site residue. Asparagine 211 carries N-linked (GlcNAc...) asparagine glycosylation. Tyrosine 265 contributes to the substrate binding site. Cysteines 271 and 324 form a disulfide. Glutamate 308 acts as the Nucleophile in catalysis. Residue tyrosine 373 coordinates substrate. 7 N-linked (GlcNAc...) asparagine glycosylation sites follow: asparagine 411, asparagine 442, asparagine 456, asparagine 626, asparagine 735, asparagine 768, and asparagine 775.

Belongs to the glycosyl hydrolase 35 family.

The protein resides in the secreted. It catalyses the reaction Hydrolysis of terminal non-reducing beta-D-galactose residues in beta-D-galactosides.. Cleaves beta-linked terminal galactosyl residues from gangliosides, glycoproteins, and glycosaminoglycans. The polypeptide is Probable beta-galactosidase B (lacB) (Penicillium rubens (strain ATCC 28089 / DSM 1075 / NRRL 1951 / Wisconsin 54-1255) (Penicillium chrysogenum)).